A 528-amino-acid polypeptide reads, in one-letter code: Probable serine/threonine-protein kinase 380R (528 aa).

The interval 70–96 (VKIPKSKSPPKVKSPKRKKSPVRRRVS) is disordered. The segment covering 73–95 (PKSKSPPKVKSPKRKKSPVRRRV) has biased composition (basic residues). Residues 156-507 (FTNVKAVGKG…LANVLIHKIF (352 aa)) form the Protein kinase domain. Residues 162–170 (VGKGSFGTV) and Lys-187 contribute to the ATP site. Asp-302 serves as the catalytic Proton acceptor.

Belongs to the protein kinase superfamily. Ser/Thr protein kinase family.

The enzyme catalyses L-seryl-[protein] + ATP = O-phospho-L-seryl-[protein] + ADP + H(+). It carries out the reaction L-threonyl-[protein] + ATP = O-phospho-L-threonyl-[protein] + ADP + H(+). This chain is Probable serine/threonine-protein kinase 380R, found in Invertebrate iridescent virus 6 (IIV-6).